The sequence spans 332 residues: Ferredoxin--NADP reductase 2 (332 aa).

Positions 37, 45, 50, 90, 124, 285, and 326 each coordinate FAD.

The protein belongs to the ferredoxin--NADP reductase type 2 family. Homodimer. It depends on FAD as a cofactor.

The catalysed reaction is 2 reduced [2Fe-2S]-[ferredoxin] + NADP(+) + H(+) = 2 oxidized [2Fe-2S]-[ferredoxin] + NADPH. This is Ferredoxin--NADP reductase 2 (yumC) from Bacillus subtilis (strain 168).